Reading from the N-terminus, the 141-residue chain is Lutropin subunit beta (141 aa).

The N-terminal stretch at 1 to 20 is a signal peptide; that stretch reads MEMFQGLLLWLLLNTGGAWA. Disulfide bonds link cysteine 29-cysteine 77, cysteine 43-cysteine 92, cysteine 46-cysteine 130, cysteine 54-cysteine 108, cysteine 58-cysteine 110, and cysteine 113-cysteine 120. Asparagine 33 carries N-linked (GlcNAc...) asparagine glycosylation.

It belongs to the glycoprotein hormones subunit beta family. As to quaternary structure, heterodimer of a common alpha chain and a unique beta chain which confers biological specificity to thyrotropin, lutropin, follitropin and gonadotropin.

It is found in the secreted. Promotes spermatogenesis and ovulation by stimulating the testes and ovaries to synthesize steroids. This Ailuropoda melanoleuca (Giant panda) protein is Lutropin subunit beta (LHB).